The primary structure comprises 234 residues: LRP chaperone MESD (234 aa).

Residues 1–33 form the signal peptide; the sequence is MAASRWARKAVVLLCASDLLLLLLLLPPPGSCA. The segment at 1 to 164 is chaperone domain; the sequence is MAASRWARKA…DRAIFMLRDG (164 aa). 2 disordered regions span residues 31–95 and 187–234; these read SCAA…DFSK and GQVY…REDL. Basic and acidic residues predominate over residues 54 to 70; it reads DIRDYNDADMARLLEQW. The segment covering 71–80 has biased composition (acidic residues); sequence EKDDDIEEGD. Positions 165 to 204 are escort domain; the sequence is SYAWEIKDFLVGQDRCADVTLEGQVYPGKGGGSKEKNKTK. Residues 196-234 are compositionally biased toward basic and acidic residues; it reads GSKEKNKTKQDKGKKKKEGDLKSRSSKEENRAGNKREDL. N-linked (GlcNAc...) asparagine glycosylation is present at N201. Positions 231-234 match the Prevents secretion from ER motif; that stretch reads REDL.

It belongs to the MESD family. In terms of assembly, monomer. Interacts with LRP5; the interaction prevents LRP5 from forming aggregates and chaperones LRP6 to the plasma membrane. Interacts with LRP6; the interaction prevents LRP6 from forming aggregates and chaperones LRP6 to the plasma membrane. Interacts with LRP4; the interaction promotes glycosylation of LRP4 and its cell-surface expression.

The protein localises to the endoplasmic reticulum. Chaperone specifically assisting the folding of beta-propeller/EGF modules within the family of low-density lipoprotein receptors (LDLRs). Acts as a modulator of the Wnt pathway through chaperoning the coreceptors of the canonical Wnt pathway, LRP5 and LRP6, to the plasma membrane. Essential for specification of embryonic polarity and mesoderm induction. Plays an essential role in neuromuscular junction (NMJ) formation by promoting cell-surface expression of LRP4. May regulate phagocytosis of apoptotic retinal pigment epithelium (RPE) cells. The sequence is that of LRP chaperone MESD from Homo sapiens (Human).